A 511-amino-acid chain; its full sequence is Phosphoenolpyruvate carboxylase (511 aa).

This sequence belongs to the PEPCase type 2 family. As to quaternary structure, homotetramer. Mg(2+) is required as a cofactor.

The catalysed reaction is oxaloacetate + phosphate = phosphoenolpyruvate + hydrogencarbonate. Catalyzes the irreversible beta-carboxylation of phosphoenolpyruvate (PEP) to form oxaloacetate (OAA), a four-carbon dicarboxylic acid source for the tricarboxylic acid cycle. The protein is Phosphoenolpyruvate carboxylase of Saccharolobus islandicus (strain L.S.2.15 / Lassen #1) (Sulfolobus islandicus).